We begin with the raw amino-acid sequence, 558 residues long: Formate--tetrahydrofolate ligase (558 aa).

An ATP-binding site is contributed by 66–73 (TPAGEGKT).

Belongs to the formate--tetrahydrofolate ligase family.

It catalyses the reaction (6S)-5,6,7,8-tetrahydrofolate + formate + ATP = (6R)-10-formyltetrahydrofolate + ADP + phosphate. Its pathway is one-carbon metabolism; tetrahydrofolate interconversion. This is Formate--tetrahydrofolate ligase from Neisseria meningitidis serogroup B (strain ATCC BAA-335 / MC58).